The sequence spans 388 residues: Pentatricopeptide repeat-containing protein 2, mitochondrial (388 aa).

Residues T166–K200 form a PPR repeat. The residue at position 382 (S382) is a Phosphoserine.

Belongs to the PTCD2 family.

The protein resides in the mitochondrion. Its function is as follows. Involved in mitochondrial RNA maturation and mitochondrial respiratory chain function. The sequence is that of Pentatricopeptide repeat-containing protein 2, mitochondrial (PTCD2) from Homo sapiens (Human).